The sequence spans 195 residues: NADH dehydrogenase [ubiquinone] iron-sulfur protein 3 (195 aa).

This sequence belongs to the complex I 30 kDa subunit family. Complex I is composed of about 45 different subunits. This is a component of the iron-sulfur (IP) fragment of the enzyme.

It is found in the mitochondrion inner membrane. It catalyses the reaction a ubiquinone + NADH + 5 H(+)(in) = a ubiquinol + NAD(+) + 4 H(+)(out). Functionally, core subunit of the mitochondrial membrane respiratory chain NADH dehydrogenase (Complex I) that is believed to belong to the minimal assembly required for catalysis. Complex I functions in the transfer of electrons from NADH to the respiratory chain. The immediate electron acceptor for the enzyme is believed to be ubiquinone. This Marchantia polymorpha (Common liverwort) protein is NADH dehydrogenase [ubiquinone] iron-sulfur protein 3 (NAD9).